A 188-amino-acid chain; its full sequence is Ribosome maturation factor RimP (188 aa).

Belongs to the RimP family.

The protein localises to the cytoplasm. Its function is as follows. Required for maturation of 30S ribosomal subunits. This is Ribosome maturation factor RimP from Corynebacterium aurimucosum (strain ATCC 700975 / DSM 44827 / CIP 107346 / CN-1) (Corynebacterium nigricans).